We begin with the raw amino-acid sequence, 234 residues long: Transcriptional activator protein TraR (234 aa).

Residues 167-232 (TAEDAAWLDP…HLTALAIRRK (66 aa)) form the HTH luxR-type domain. Residues 191-210 (MEEIADVEGVKYNSVRVKLR) constitute a DNA-binding region (H-T-H motif).

Belongs to the autoinducer-regulated transcriptional regulatory protein family.

Functionally, positive regulation of conjugal transfer of Ti plasmids. TraR activates target genes in the presence of AAI and also activates traR and traI themselves. In Rhizobium radiobacter (Agrobacterium tumefaciens), this protein is Transcriptional activator protein TraR (traR).